The following is a 197-amino-acid chain: Probable deoxycytidylate deaminase (197 aa).

The CMP/dCMP-type deaminase domain occupies Lys49 to Tyr183. Position 117 (His117) interacts with Zn(2+). Glu119 serves as the catalytic Proton donor. Positions 143 and 146 each coordinate Zn(2+).

The protein belongs to the cytidine and deoxycytidylate deaminase family. It depends on Zn(2+) as a cofactor.

It catalyses the reaction dCMP + H2O + H(+) = dUMP + NH4(+). In terms of biological role, supplies the nucleotide substrate for thymidylate synthetase. The protein is Probable deoxycytidylate deaminase of Caenorhabditis elegans.